The following is a 615-amino-acid chain: Protein translocase subunit SecD (615 aa).

Transmembrane regions (helical) follow at residues 10–30 (YIML…NLYG), 452–472 (QGLE…IFFY), 477–497 (LIAT…MSLL), 504–524 (MPGI…NVLI), 546–568 (YAGA…IILY), and 585–605 (GVAT…NLLY).

Belongs to the SecD/SecF family. SecD subfamily. As to quaternary structure, forms a complex with SecF. Part of the essential Sec protein translocation apparatus which comprises SecA, SecYEG and auxiliary proteins SecDF-YajC and YidC.

Its subcellular location is the cell inner membrane. In terms of biological role, part of the Sec protein translocase complex. Interacts with the SecYEG preprotein conducting channel. SecDF uses the proton motive force (PMF) to complete protein translocation after the ATP-dependent function of SecA. This chain is Protein translocase subunit SecD, found in Salmonella choleraesuis (strain SC-B67).